Reading from the N-terminus, the 394-residue chain is Envelope glycoprotein D (394 aa).

Positions 1 to 25 (MGGAAARLGAVILFVVIVGLHGVRG) are cleaved as a signal peptide. Residues 26–57 (KYALADASLKMADPNRFRGKDLPVLDQLTDPP) form an interaction with TNFRSF14 region. The Virion surface segment spans residues 26–340 (KYALADASLK…YHPPATPNNM (315 aa)). Histidine 64 is a binding site for Zn(2+). Cystine bridges form between cysteine 91-cysteine 214, cysteine 131-cysteine 227, and cysteine 143-cysteine 152. Asparagine 119 and asparagine 146 each carry an N-linked (GlcNAc...) asparagine; by host glycan. Aspartate 240 serves as a coordination point for Zn(2+). A profusion region spans residues 261–305 (LKIAGWHGPKAPYTSTLLPPELSETPNATQPELAPEDPEDSALLE). The interval 275–301 (STLLPPELSETPNATQPELAPEDPEDS) is disordered. N-linked (GlcNAc...) asparagine; by host glycosylation is present at asparagine 287. The chain crosses the membrane as a helical span at residues 341 to 361 (GLIAGAVGGSLLAALVICGIV). At 362–394 (YWMHRRTRKAPKRIRLPHIREDDQPSSHQPLFY) the chain is on the intravirion side.

It belongs to the herpesviridae glycoprotein D family. As to quaternary structure, homodimer. Interacts with host receptor TNFRSF14. Interacts with host receptor NECTIN1. Mutant Rid1 interacts with host receptor NECTIN2. Interacts (via profusion domain) with gB; this interaction occurs in the absence of gH/gL. Interacts (via profusion domain) with gH/gL heterodimer; this interaction occurs in the absence of gB. Associates with the gB-gH/gL-gD complex. Interacts (via C-terminus) with UL11 tegument protein. Interacts (via C-terminus) with VP22 tegument protein; this interaction might be very weak. Interacts with host RSAD2.

It is found in the virion membrane. The protein localises to the host Golgi apparatus. In terms of biological role, envelope glycoprotein that binds to the host cell entry receptors NECTIN1, TNFRSF14/HVEM and 3-O-sulfated heparan sulfate, promoting the virus entry into host cells. May trigger fusion with host membrane, by recruiting the fusion machinery composed of gB and gH/gL. This chain is Envelope glycoprotein D (gD), found in Human herpesvirus 1 (strain KOS) (HHV-1).